Reading from the N-terminus, the 512-residue chain is MAEIVDCFADRPIIVGSGLAGLIAALTMSPEPSVLVTRSALGAETSSAWAQGGMSVSLSPDDNPSLHLADTLAAGDGLCDAVAAESIILEALDAFHVLQHFGIHFDQDSNGHLALGLEAAHSRRRIVHVGGDRSGTAIVQALTACVLNDPSITVLEGLEARHILMADNVVCGLLLANPTSEIVLPSSRILLATGGIGGLYDATTNPVSNFGQGIAMAARAGAVLADMEFVQFHPTALHCHNRPLALVSEAVRGEGAVLINERGERFMADIPGAELAARNIVAQAISAEITRGGQVFLDARQALGARFSTRFPTITALCHKVGIDPVHMPIPVCPAAHYHMGGIAIDHQGRSSIPGLWVAGEAASTGLHGANRLASNSLLEAVVMGTRAARDITFHNTPHPLGTIPITPKKPDTTLIRPIVSQCLGVLRHAADMHRAIAALLPFVEGEEESSDPAIVALLIAIFAYLRTESRGAHARTDFPLKHDTTQRRHMTLEDVLEIAHSCVAQRKEKIS.

FAD-binding positions include 17–20 (SGLA) and 46–53 (SSAWAQGG). Arg-278 (proton donor/acceptor) is an active-site residue. Residues Glu-361 and 377–378 (SL) each bind FAD.

Belongs to the FAD-dependent oxidoreductase 2 family. NadB subfamily. The cofactor is FAD.

It localises to the cytoplasm. It carries out the reaction L-aspartate + O2 = iminosuccinate + H2O2. It participates in cofactor biosynthesis; NAD(+) biosynthesis; iminoaspartate from L-aspartate (oxidase route): step 1/1. In terms of biological role, catalyzes the oxidation of L-aspartate to iminoaspartate, the first step in the de novo biosynthesis of NAD(+). The sequence is that of L-aspartate oxidase (nadB) from Xylella fastidiosa (strain 9a5c).